A 166-amino-acid chain; its full sequence is NAD(P)H-quinone oxidoreductase subunit I, chloroplastic (166 aa).

2 4Fe-4S ferredoxin-type domains span residues glycine 55 to lysine 84 and leucine 95 to glutamate 124. Residues cysteine 64, cysteine 67, cysteine 70, cysteine 74, cysteine 104, cysteine 107, cysteine 110, and cysteine 114 each contribute to the [4Fe-4S] cluster site.

This sequence belongs to the complex I 23 kDa subunit family. NDH is composed of at least 16 different subunits, 5 of which are encoded in the nucleus. [4Fe-4S] cluster is required as a cofactor.

Its subcellular location is the plastid. The protein localises to the chloroplast thylakoid membrane. The enzyme catalyses a plastoquinone + NADH + (n+1) H(+)(in) = a plastoquinol + NAD(+) + n H(+)(out). The catalysed reaction is a plastoquinone + NADPH + (n+1) H(+)(in) = a plastoquinol + NADP(+) + n H(+)(out). In terms of biological role, NDH shuttles electrons from NAD(P)H:plastoquinone, via FMN and iron-sulfur (Fe-S) centers, to quinones in the photosynthetic chain and possibly in a chloroplast respiratory chain. The immediate electron acceptor for the enzyme in this species is believed to be plastoquinone. Couples the redox reaction to proton translocation, and thus conserves the redox energy in a proton gradient. The sequence is that of NAD(P)H-quinone oxidoreductase subunit I, chloroplastic from Pericome caudata (Mountain tail-leaf).